The primary structure comprises 127 residues: Protein ApaG (127 aa).

Residues 3 to 127 (ANSPPTIKCN…FRLAIPNILH (125 aa)) enclose the ApaG domain.

This Photobacterium profundum (strain SS9) protein is Protein ApaG.